Here is a 249-residue protein sequence, read N- to C-terminus: Small ribosomal subunit protein uS3 (249 aa).

In terms of domain architecture, KH type-2 spans valine 39–arginine 107. Residues leucine 215–glycine 249 form a disordered region. Residues glycine 230 to glycine 249 show a composition bias toward basic and acidic residues.

Belongs to the universal ribosomal protein uS3 family. In terms of assembly, part of the 30S ribosomal subunit. Forms a tight complex with proteins S10 and S14.

Binds the lower part of the 30S subunit head. Binds mRNA in the 70S ribosome, positioning it for translation. The chain is Small ribosomal subunit protein uS3 from Caulobacter sp. (strain K31).